A 656-amino-acid chain; its full sequence is MQLRHINIRALIAEAGGDPWAIEHSLHAGRPAQIAELAEAFHAAGRCTAEANAAFEEARRRFEASWNRENGEHPINDSAEVQRVTAALGVQSLQLPKIGVDLENIAADLAEAQRAAAGRIATLESQLQRIDDQLDQALELEHDPRLAAAERSELDALITCLEQDAIDDTASALGQLQSIRAGYSDHLQQSLAMLRADGYDGAGLQGLDAPQSPVKPEEPIQIPPPGTGAPEVHRWWTSLTSEERQRLIAEHPEQIGNLNGVPVSARSDANIAVMTRDLNRVRDIATRYRTSVDDVLGDPAKYGLSAGDITRYRNADETKKGLDHNARNDPRNPSPVYLFAYDPMAFGGKGRAAIAIGNPDTAKHTAVIVPGTSSSVKGGWLHDNHDDALNLFNQAKAADPNNPTAVIAWMGYDAPNDFTDPRIATPMLARIGGAALAEDVNGLWVTHLGVGQNVTVLGHSYGSTTVADAFALGGMHANDAVLLGCPGTDLAHSAASFHLDGGRVYVGAASTDPISMLGQLDSLSQYVNRGNLAGQLQGLAVGLGTDPAGDGFGSVRFRAEVPNSDGINPHDHSYYYHRGSEALRSMADIASGHGDALASDGMLAQPRHQPGVEIDIPGLGSVEIDIPGTPASIDPEWSRPPGSITDDHVFDAPLHR.

A disordered region spans residues 623-656; the sequence is EIDIPGTPASIDPEWSRPPGSITDDHVFDAPLHR. Residues 645–656 show a composition bias toward basic and acidic residues; the sequence is TDDHVFDAPLHR.

This is an uncharacterized protein from Mycobacterium tuberculosis (strain CDC 1551 / Oshkosh).